A 257-amino-acid polypeptide reads, in one-letter code: Probable oxidoreductase yanE (257 aa).

This sequence belongs to the oxidoreductase OpS7 family.

Its pathway is secondary metabolite biosynthesis; terpenoid biosynthesis. In terms of biological role, part of the gene cluster that mediates the biosynthesis of yanuthone D, a fungal isoprenoid epoxycyclohexenone that acts as an antibiotic against fungi and bacteria. The first step of the pathway is the synthesis of 6-methylsalicylic acid (6-MSA) by the polyketide synthase yanA. 6-MSA is then converted to m-cresol by the decarboxylase yanB. The cytochrome P450 monooxygenase yanC then catalyzes the oxidation of m-cresol to toluquinol. Epoxidation of toluquinol is then performed by the short chain dehydrogenase yanD, with the help of yanE, and a further prenylation by yanG leads to 7-deacetoxyyanuthone A. The next step is the hydroxylation of C-22 of 7-deacetoxyyanuthone A by the cytochrome P450 monooxygenase yanH to yield 22-deacetylyanuthone A. O-Mevalon transferase yanI then attaches mevalon to the hydroxyl group of 22-deacetylyanuthone A to produce yanuthone E. Finally, the FAD-dependent monooxygenase yanF oxidizes the hydroxyl group at C15 of yanuthone E to form yanuthone D. Furthermore, several branching points in the pathway lead to the production of yanuthones F and G from 7-deacetoxyyanuthone A; yanuthones H and I from 22-deacetylyanuthone A; and yanuthone J from yanuthone E. YanE is also involved in the synthesis of yanuthone X1 which does not have 6-methylsalicylic acid (6-MSA) as precursor. This chain is Probable oxidoreductase yanE, found in Aspergillus niger (strain ATCC 1015 / CBS 113.46 / FGSC A1144 / LSHB Ac4 / NCTC 3858a / NRRL 328 / USDA 3528.7).